Reading from the N-terminus, the 277-residue chain is Protein CIMAP1D (277 aa).

3 STPGR repeats span residues 122 to 148, 202 to 227, and 238 to 263; these read PGPG…LGSR, PGPG…ILGR, and PGPG…MGIR. The segment at 181–277 is disordered; that stretch reads PSYTVVGRTP…ASTMVGDTKC (97 aa).

Belongs to the CIMAP family.

This chain is Protein CIMAP1D (Cimap1d), found in Mus musculus (Mouse).